The sequence spans 227 residues: UPF0758 protein SSA_1218 (227 aa).

The region spanning 104 to 226 (QIMGSQKLAR…YYSYREETDM (123 aa)) is the MPN domain. The Zn(2+) site is built by His-175, His-177, and Asp-188. Residues 175 to 188 (HNHPSGSVVPSRND) carry the JAMM motif motif.

The protein belongs to the UPF0758 family.

In Streptococcus sanguinis (strain SK36), this protein is UPF0758 protein SSA_1218.